A 940-amino-acid chain; its full sequence is Isoleucine--tRNA ligase (940 aa).

The 'HIGH' region motif lies at 58-68 (PYANGSIHIGH). Residue Glu564 participates in L-isoleucyl-5'-AMP binding. The 'KMSKS' region motif lies at 605–609 (KMSKS). Lys608 serves as a coordination point for ATP. Residues Cys903, Cys906, Cys923, and Cys926 each contribute to the Zn(2+) site.

The protein belongs to the class-I aminoacyl-tRNA synthetase family. IleS type 1 subfamily. Monomer. Zn(2+) serves as cofactor.

The protein localises to the cytoplasm. It catalyses the reaction tRNA(Ile) + L-isoleucine + ATP = L-isoleucyl-tRNA(Ile) + AMP + diphosphate. In terms of biological role, catalyzes the attachment of isoleucine to tRNA(Ile). As IleRS can inadvertently accommodate and process structurally similar amino acids such as valine, to avoid such errors it has two additional distinct tRNA(Ile)-dependent editing activities. One activity is designated as 'pretransfer' editing and involves the hydrolysis of activated Val-AMP. The other activity is designated 'posttransfer' editing and involves deacylation of mischarged Val-tRNA(Ile). The chain is Isoleucine--tRNA ligase from Shewanella sp. (strain ANA-3).